The primary structure comprises 197 residues: MLRVGVIGVQGAVSEHIEAVKRAFERLGVEGEAFWLRRPEQLNAIDAIILPGGESTTISRLMQKNGLFEPVKKLGEEGLPIMGTCAGLILLAKEVEGAVEGQRFLELLDVRVNRNAYGRQVDSFEAPLKLSFSDEPFPGVFIRAPKIVELLNDKVKPIAWHGDEVVGVEQGNIIGLAFHPELTDDARLHEYFLRKAL.

53–55 (GES) serves as a coordination point for L-glutamine. The Nucleophile role is filled by C85. Residues R114 and 142 to 143 (IR) each bind L-glutamine. Residues H179 and E181 each act as charge relay system in the active site.

It belongs to the glutaminase PdxT/SNO family. As to quaternary structure, in the presence of PdxS, forms a dodecamer of heterodimers. Only shows activity in the heterodimer.

It catalyses the reaction aldehydo-D-ribose 5-phosphate + D-glyceraldehyde 3-phosphate + L-glutamine = pyridoxal 5'-phosphate + L-glutamate + phosphate + 3 H2O + H(+). It carries out the reaction L-glutamine + H2O = L-glutamate + NH4(+). Its pathway is cofactor biosynthesis; pyridoxal 5'-phosphate biosynthesis. Its function is as follows. Catalyzes the hydrolysis of glutamine to glutamate and ammonia as part of the biosynthesis of pyridoxal 5'-phosphate. The resulting ammonia molecule is channeled to the active site of PdxS. The sequence is that of Pyridoxal 5'-phosphate synthase subunit PdxT from Thermococcus onnurineus (strain NA1).